Here is a 570-residue protein sequence, read N- to C-terminus: MSEKHPGPLVVEGKLSDAERMKLESNYLRGTIAEDLNDGLTGGFKGDNFLLIRFHGMYQQDDRDIRAERAAQKLEPRHAMLLRCRLPGGVITTTQWQAIDKFAADNTIYGSIRLTNRQTFQFHGILKKNVKPVHQMLHSVGLDALATANDMNRNVLCTSNPYESQLHAEAYEWAKKISEHLLPRTRAYAEIWLDQEKVATTDEEPILGQTYLPRKFKTTVVIPPQNDIDLHANDMNFVAIAENGKLVGFNLLVGGGLSIEHGNKKTYARTASEFGYLPLEHTLAVAEAVVTTQRDWGNRTDRKNAKTKYTLERVGLETFKAEVERRAGIKFEPIRPYEFTGRGDRIGWVKGIDNNWHLTLFIENGRILDYPGRPLKTGLLEIAKIHQGEFRITANQNLIIASVPESQKAKIEKLARDHGLMNAVSAQRENSMACVSFPTCPLAMAEAERFLPSFTDKVEAILEKHGIPDEHIVMRVTGCPNGCGRAMLAELGLVGKAPGRYNVHLGGNRMGTRIPRMYRENITESEILDSVDELVGRWAKEREAGEGFGDFTVRAGIIRPVLDPARDFWE.

The [4Fe-4S] cluster site is built by cysteine 434, cysteine 440, cysteine 479, and cysteine 483. Residue cysteine 483 coordinates siroheme.

This sequence belongs to the nitrite and sulfite reductase 4Fe-4S domain family. Alpha(8)-beta(8). The alpha component is a flavoprotein, the beta component is a hemoprotein. Requires siroheme as cofactor. [4Fe-4S] cluster is required as a cofactor.

It carries out the reaction hydrogen sulfide + 3 NADP(+) + 3 H2O = sulfite + 3 NADPH + 4 H(+). It functions in the pathway sulfur metabolism; hydrogen sulfide biosynthesis; hydrogen sulfide from sulfite (NADPH route): step 1/1. In terms of biological role, component of the sulfite reductase complex that catalyzes the 6-electron reduction of sulfite to sulfide. This is one of several activities required for the biosynthesis of L-cysteine from sulfate. In Salmonella paratyphi B (strain ATCC BAA-1250 / SPB7), this protein is Sulfite reductase [NADPH] hemoprotein beta-component.